The sequence spans 169 residues: Cilia- and flagella-associated protein 276 (169 aa).

Disordered regions lie at residues 26–45 (SKKLPYKNPTHLAQQQEPWS) and 150–169 (HTAATNGGYSRKKDGGFFST). The segment covering 36–45 (HLAQQQEPWS) has biased composition (polar residues). Basic and acidic residues predominate over residues 160–169 (RKKDGGFFST).

As to quaternary structure, microtubule inner protein component of sperm flagellar doublet microtubules. In terms of tissue distribution, expressed in cerebrum, cerebellum, gastrocnemius muscle, spinal cord and lung tissues.

It is found in the cytoplasm. It localises to the cytoskeleton. The protein localises to the flagellum axoneme. Its subcellular location is the cilium axoneme. Its function is as follows. Microtubule inner protein (MIP) part of the dynein-decorated doublet microtubules (DMTs) in cilia axoneme, which is required for motile cilia beating. May play an important role for the maintenance of myelin-axon integrity. May affect intracellular Ca(2+) homeostasis. This is Cilia- and flagella-associated protein 276 from Homo sapiens (Human).